Here is a 96-residue protein sequence, read N- to C-terminus: Putative membrane protein insertion efficiency factor (96 aa).

Residues 71 to 84 (THGTAAAPPASAAP) are compositionally biased toward low complexity. A disordered region spans residues 71–96 (THGTAAAPPASAAPGRPPVTVRLPRP).

The protein belongs to the UPF0161 family.

It localises to the cell inner membrane. Functionally, could be involved in insertion of integral membrane proteins into the membrane. The sequence is that of Putative membrane protein insertion efficiency factor from Cupriavidus metallidurans (strain ATCC 43123 / DSM 2839 / NBRC 102507 / CH34) (Ralstonia metallidurans).